The primary structure comprises 309 residues: Metaxin-3 (309 aa).

Positions 274–309 (MDDNLRRSPQNRPQKLSTLKPVGGAENSHSSDLLSH) are disordered. Composition is skewed to polar residues over residues 280 to 290 (RSPQNRPQKLS) and 300 to 309 (NSHSSDLLSH).

This sequence belongs to the metaxin family. In terms of assembly, part of a large protein complex spanning both mitochondrial membranes termed the mitochondrial intermembrane space bridging (MIB) complex.

The protein resides in the mitochondrion. It is found in the mitochondrion outer membrane. In terms of biological role, could function in transport of proteins into the mitochondrion. This is Metaxin-3 (mtx3) from Xenopus laevis (African clawed frog).